A 444-amino-acid chain; its full sequence is Viral protein kinase (444 aa).

A disordered region spans residues 1–25 (MRWKRMERRPPLTPLRRSRTQSSGG). ATP contacts are provided by residues 90–98 (LGRGAFGII) and Lys108. The Proton acceptor role is filled by Asp201.

In terms of assembly, interacts with protein K-bZIP/K8. Interacts with host beta-catenin/CTNNB1. In terms of processing, AUtophosphorylated.

Its subcellular location is the host nucleus. It catalyses the reaction L-seryl-[protein] + ATP = O-phospho-L-seryl-[protein] + ADP + H(+). It carries out the reaction L-threonyl-[protein] + ATP = O-phospho-L-threonyl-[protein] + ADP + H(+). Its function is as follows. Serine/threonine protein kinase that plays a role in viral gene expression, viral DNA replication and encapsidation, and nuclear egress of virions. Regulates host transcriptional activity through interactions with RNA helicase and c-Jun N-terminal kinase (JNK) and viral transcriptional activity through interactions with the viral protein K-bZIP/K8. Induces host chromosome condensation and phosphorylation of histone H3. Phosphorylates the DNA polymerase processivity factor hence modulating its processivity function. Inhibits the host Wnt signaling pathway via direct interactions with beta-catenin/CTNNB1 while the kinase activity of vPK is not required for this inhibitory activity. Also phosphorylates host SAMHD1 and thereby counteracts its antiviral effect by reducing its dNTP hydrolase activity. The protein is Viral protein kinase (vPK) of Human herpesvirus 8 type P (isolate GK18) (HHV-8).